A 302-amino-acid chain; its full sequence is ICOS ligand (302 aa).

The signal sequence occupies residues 1–18 (MRLGSPGLLFLLFSSLRA). The region spanning 19-129 (DTQEKEVRAM…LGFQEVLSVE (111 aa)) is the Ig-like V-type domain. Residues 19–256 (DTQEKEVRAM…VSTGEKNAAT (238 aa)) are Extracellular-facing. A disulfide bond links C37 and C113. 5 N-linked (GlcNAc...) asparagine glycosylation sites follow: N70, N137, N173, N186, and N225. The Ig-like C2-type domain occupies 141-227 (PVVSAPHSPS…ENVLLQQNLT (87 aa)). A disulfide bond links C158 and C216. Residues 257-277 (WSILAVLCLLVVVAVAIGWVC) traverse the membrane as a helical segment. Residues 278 to 302 (RDRCLQHSYAGAWAVSPETELTGHV) are Cytoplasmic-facing.

This sequence belongs to the immunoglobulin superfamily. BTN/MOG family. In terms of assembly, interacts with CTLA4 (in vitro). Expressed on peripheral blood B-cells and monocytes, as well as on monocyte-derived dendritic cells (at protein level). As to expression, widely expressed (brain, heart, kidney, liver, lung, pancreas, placenta, skeletal muscle, bone marrow, colon, ovary, prostate, testis, lymph nodes, leukocytes, spleen, thymus and tonsil). In terms of tissue distribution, detected only in lymph nodes, leukocytes and spleen. Expressed on activated monocytes and dendritic cells.

It is found in the cell membrane. Ligand for the T-cell-specific cell surface receptor ICOS. Acts as a costimulatory signal for T-cell proliferation and cytokine secretion. Also induces B-cell proliferation and differentiation into plasma cells. Could play an important role in mediating local tissue responses to inflammatory conditions, as well as in modulating the secondary immune response by co-stimulating memory T-cell function. In endothelial cells, required for proper neutrophil transmigration in response to chemoattractants, such as CXCL8/IL8 or N-formyl-methionyl peptides (fMLP). This Homo sapiens (Human) protein is ICOS ligand (ICOSLG).